A 543-amino-acid polypeptide reads, in one-letter code: MAELTIDPASIRKALDDFVSSYKPSDTPTQEVGYVATAGDGIAHVTGLPGCMANELLTFEDGTLGLAFNLDAREIGVVILGDFAGIEEGQEVRRTGEVLSVPVGDGYLGRVVDPLGKPLDGLGEIQGIEGRRILEAQAPDVMHRHPVDEPLSTGLKAIDAMTPIGRGQRQLIIGDRQTGKTAIAIDTIINQKANWESGDPKKQVRCIYVAIGQKGSTIASVKQSLEDAGAMEYTTIVASPAADSAGFKYIAPYTGSAIGQHWMYNGKHVLIVFDDLSKQAEAYRSISLLLRRPPGREAYPGDVFYLHSRLLERCAKVSDDLGGGSMTGLPIVETKANDVSAYIPTNVISITDGQIFLQSDLFNANQRPAVDVGISVSRVGGAAQTKALKKVSGTLKISLAQYRSLESFAMFASDLDAASKAQLTRGAHLTELLKQPQFHPYSPEQEVVSVWTGTHGKLDDLDLKDVLPFEQGLLDYIDHNTDILKTIRETEEFTADTEAALDKAVDEFRSTFVSSAGKPLVEKKPDVDKAAPVDQEKIVAGEK.

Residue Gly-174 to Thr-181 participates in ATP binding. The tract at residues Val-521–Lys-543 is disordered.

The protein belongs to the ATPase alpha/beta chains family. As to quaternary structure, F-type ATPases have 2 components, CF(1) - the catalytic core - and CF(0) - the membrane proton channel. CF(1) has five subunits: alpha(3), beta(3), gamma(1), delta(1), epsilon(1). CF(0) has three main subunits: a(1), b(2) and c(9-12). The alpha and beta chains form an alternating ring which encloses part of the gamma chain. CF(1) is attached to CF(0) by a central stalk formed by the gamma and epsilon chains, while a peripheral stalk is formed by the delta and b chains.

It is found in the cell membrane. It catalyses the reaction ATP + H2O + 4 H(+)(in) = ADP + phosphate + 5 H(+)(out). Produces ATP from ADP in the presence of a proton gradient across the membrane. The alpha chain is a regulatory subunit. This is ATP synthase subunit alpha from Bifidobacterium longum (strain DJO10A).